Here is a 446-residue protein sequence, read N- to C-terminus: Methionine aminopeptidase 2-1 (446 aa).

The segment at 1 to 88 (MAAQVTPELA…PPRVILSSIF (88 aa)) is disordered. A compositionally biased stretch (acidic residues) spans 32–44 (ENEDVESDDDNEG). Over residues 57–72 (AKKKKKKKPKKKKKGG) the composition is skewed to basic residues. Substrate is bound at residue H196. Positions 216, 227, and 296 each coordinate a divalent metal cation. H304 contributes to the substrate binding site. The a divalent metal cation site is built by E332 and E427.

Belongs to the peptidase M24A family. Methionine aminopeptidase eukaryotic type 2 subfamily. Requires Co(2+) as cofactor. Zn(2+) is required as a cofactor. It depends on Mn(2+) as a cofactor. The cofactor is Fe(2+).

Its subcellular location is the cytoplasm. The catalysed reaction is Release of N-terminal amino acids, preferentially methionine, from peptides and arylamides.. Cotranslationally removes the N-terminal methionine from nascent proteins. The N-terminal methionine is often cleaved when the second residue in the primary sequence is small and uncharged (Met-Ala-, Cys, Gly, Pro, Ser, Thr, or Val). The protein is Methionine aminopeptidase 2-1 of Blastomyces gilchristii (strain SLH14081) (Blastomyces dermatitidis).